The following is a 244-amino-acid chain: tRNA (guanine-N(1)-)-methyltransferase (244 aa).

S-adenosyl-L-methionine-binding positions include Gly-123 and 143-148; that span reads LGDFVM.

It belongs to the RNA methyltransferase TrmD family. As to quaternary structure, homodimer.

The protein resides in the cytoplasm. It catalyses the reaction guanosine(37) in tRNA + S-adenosyl-L-methionine = N(1)-methylguanosine(37) in tRNA + S-adenosyl-L-homocysteine + H(+). In terms of biological role, specifically methylates guanosine-37 in various tRNAs. The polypeptide is tRNA (guanine-N(1)-)-methyltransferase (Ruegeria sp. (strain TM1040) (Silicibacter sp.)).